The sequence spans 305 residues: Autophagy-related protein 14 (305 aa).

Residues 34-147 (KMNLLILRQE…LDTLSHILAR (114 aa)) are a coiled coil.

This sequence belongs to the ATG14 family. In terms of assembly, component of the autophagy-specific VPS34 PI3-kinase complex I.

The protein resides in the preautophagosomal structure membrane. Its subcellular location is the vacuole membrane. Functionally, required for cytoplasm to vacuole transport (Cvt) and autophagy as a part of the autophagy-specific VPS34 PI3-kinase complex I. This complex is essential to recruit the ATG8-phosphatidylinositol conjugate and the ATG12-ATG5 conjugate to the pre-autophagosomal structure. ATG14 mediates the specific binding of the VPS34 PI3-kinase complex I to the preautophagosomal structure (PAS). The protein is Autophagy-related protein 14 of Kluyveromyces marxianus (strain DMKU3-1042 / BCC 29191 / NBRC 104275) (Yeast).